Here is a 369-residue protein sequence, read N- to C-terminus: 4-hydroxy-3-methylbut-2-en-1-yl diphosphate synthase (flavodoxin) (369 aa).

[4Fe-4S] cluster-binding residues include Cys270, Cys273, Cys305, and Glu312.

This sequence belongs to the IspG family. It depends on [4Fe-4S] cluster as a cofactor.

It catalyses the reaction (2E)-4-hydroxy-3-methylbut-2-enyl diphosphate + oxidized [flavodoxin] + H2O + 2 H(+) = 2-C-methyl-D-erythritol 2,4-cyclic diphosphate + reduced [flavodoxin]. The protein operates within isoprenoid biosynthesis; isopentenyl diphosphate biosynthesis via DXP pathway; isopentenyl diphosphate from 1-deoxy-D-xylulose 5-phosphate: step 5/6. Functionally, converts 2C-methyl-D-erythritol 2,4-cyclodiphosphate (ME-2,4cPP) into 1-hydroxy-2-methyl-2-(E)-butenyl 4-diphosphate. The sequence is that of 4-hydroxy-3-methylbut-2-en-1-yl diphosphate synthase (flavodoxin) from Pseudomonas syringae pv. syringae (strain B728a).